Consider the following 1440-residue polypeptide: Gag-Pro-Pol polyprotein (1440 aa).

G2 carries the N-myristoyl glycine; by host lipid modification. A disordered region spans residues 95–116; the sequence is EAPPSAPLAEDPQKPPPYPEQA. Residues 98-101 carry the PTAP/PSAP motif motif; sequence PSAP. The PPXY motif motif lies at 109-112; it reads PPPY. 2 consecutive CCHC-type zinc fingers follow at residues 349 to 366 and 372 to 389; these read QPCF…DCKQ and GPCP…DCPQ. The region spanning 457–535 is the Peptidase A2 domain; that stretch reads VQALLDTGAD…NQWTILGRDA (79 aa). D462 serves as the catalytic For protease activity; shared with dimeric partner. The 191-residue stretch at 593-783 folds into the Reverse transcriptase domain; sequence LEAKHIEPYQ…GPIHFLGQVI (191 aa). 9 residues coordinate Mg(2+): D659, D734, D735, D1019, E1052, D1074, D1135, D1208, and D1265. The RNase H type-1 domain maps to 1010–1143; sequence INHAPCLFSD…TDALMLAPLL (134 aa). The Integrase catalytic domain occupies 1197–1366; that stretch reads RGHAPNDIWQ…PPVPEDTLPP (170 aa). Positions 1371–1420 form a DNA-binding region, integrase-type; sequence KWYYYKIPGLTNSRWSGPVQSLKEAAGAALIPVGGSYLWIPWRLLKRGIC.

In terms of assembly, interacts with human TSG101. This interaction is essential for budding and release of viral particles. The cofactor is Mg(2+). Specific enzymatic cleavages by the viral protease yield mature proteins. The polyprotein is cleaved during and after budding, this process is termed maturation. The protease is autoproteolytically processed at its N- and C-termini.

It localises to the virion. It carries out the reaction Endonucleolytic cleavage to 5'-phosphomonoester.. It catalyses the reaction DNA(n) + a 2'-deoxyribonucleoside 5'-triphosphate = DNA(n+1) + diphosphate. Matrix protein p19 targets Gag, Gag-Pro and Gag-Pro-Pol polyproteins to the plasma membrane via a multipartite membrane binding signal, that includes its myristoylated N-terminus. Also mediates nuclear localization of the preintegration complex. Functionally, capsid protein p24 forms the conical core of the virus that encapsulates the genomic RNA-nucleocapsid complex. Its function is as follows. Nucleocapsid protein p15 is involved in the packaging and encapsidation of two copies of the genome. In terms of biological role, the aspartyl protease mediates proteolytic cleavages of Gag, Gag-Pro and Gag-Pro-Pol polyproteins during or shortly after the release of the virion from the plasma membrane. Cleavages take place as an ordered, step-wise cascade to yield mature proteins. This process is called maturation. Displays maximal activity during the budding process just prior to particle release from the cell. Hydrolyzes host EIF4GI in order to shut off the capped cellular mRNA translation. The resulting inhibition of cellular protein synthesis serves to ensure maximal viral gene expression and to evade host immune response. Reverse transcriptase (RT) is a multifunctional enzyme that converts the viral RNA genome into dsDNA in the cytoplasm, shortly after virus entry into the cell. This enzyme displays a DNA polymerase activity that can copy either DNA or RNA templates, and a ribonuclease H (RNase H) activity that cleaves the RNA strand of RNA-DNA heteroduplexes in a partially processive 3' to 5'-endonucleasic mode. Conversion of viral genomic RNA into dsDNA requires many steps. A tRNA-Pro binds to the primer-binding site (PBS) situated at the 5'-end of the viral RNA. RT uses the 3' end of the tRNA primer to perform a short round of RNA-dependent minus-strand DNA synthesis. The reading proceeds through the U5 region and ends after the repeated (R) region which is present at both ends of viral RNA. The portion of the RNA-DNA heteroduplex is digested by the RNase H, resulting in a ssDNA product attached to the tRNA primer. This ssDNA/tRNA hybridizes with the identical R region situated at the 3' end of viral RNA. This template exchange, known as minus-strand DNA strong stop transfer, can be either intra- or intermolecular. RT uses the 3' end of this newly synthesized short ssDNA to perform the RNA-dependent minus-strand DNA synthesis of the whole template. RNase H digests the RNA template except for a polypurine tract (PPT) situated at the 5' end of the genome. It is not clear if both polymerase and RNase H activities are simultaneous. RNase H probably can proceed both in a polymerase-dependent (RNA cut into small fragments by the same RT performing DNA synthesis) and a polymerase-independent mode (cleavage of remaining RNA fragments by free RTs). Secondly, RT performs DNA-directed plus-strand DNA synthesis using the PPT that has not been removed by RNase H as primer. PPT and tRNA primers are then removed by RNase H. The 3' and 5' ssDNA PBS regions hybridize to form a circular dsDNA intermediate. Strand displacement synthesis by RT to the PBS and PPT ends produces a blunt ended, linear dsDNA copy of the viral genome that includes long terminal repeats (LTRs) at both ends. Functionally, integrase catalyzes viral DNA integration into the host chromosome, by performing a series of DNA cutting and joining reactions. This enzyme activity takes place after virion entry into a cell and reverse transcription of the RNA genome in dsDNA. The first step in the integration process is 3' processing. This step requires a complex comprising the viral genome, matrix protein, and integrase. This complex is called the pre-integration complex (PIC). The integrase protein removes 2 nucleotides from each 3' end of the viral DNA, leaving recessed dinucleotides OH's at the 3' ends. In the second step, the PIC access cell chromosomes during cell division. The third step, termed strand transfer, the integrase protein joins the previously processed 3' ends to the 5'-ends of strands of target cellular DNA at the site of integration. The 5'-ends are produced by integrase-catalyzed staggered cuts, 5 bp apart. A Y-shaped, gapped, recombination intermediate results, with the 5'-ends of the viral DNA strands and the 3' ends of target DNA strands remaining unjoined, flanking a gap of 5 bp. The last step is viral DNA integration into host chromosome. This involves host DNA repair synthesis in which the 5 bp gaps between the unjoined strands (see above) are filled in and then ligated. The chain is Gag-Pro-Pol polyprotein (gag-pro-pol) from Human T-cell leukemia virus 3 (strain 2026ND) (HTLV-3).